The primary structure comprises 245 residues: MPTFLHHALLACGFLTRLVPARVATADDMAAAVRWFPLAGLVVGGACWLPFALGLAASHPAIQAWLYVLINLWVTRGLHWDGVADLADAWGSSATGERFWDILKDSRIGAFGVMGLLLGFGGQYIGAHEIFISGRLGVLIAAPIVGRGACVILAALVPPGSRSTLGRLTCAGADRIAIGVAATCGMLALLLTTPAITTVTTIAICGAIVTALAHLARREDGINGDFMGACIAGCEGTVLLAASMG.

5 helical membrane passes run Trp35–Leu55, Ile108–His128, Gly137–Val157, Ile176–Ile196, and Thr197–Arg217.

The protein belongs to the CobS family. Mg(2+) serves as cofactor.

It is found in the cell inner membrane. The enzyme catalyses alpha-ribazole + adenosylcob(III)inamide-GDP = adenosylcob(III)alamin + GMP + H(+). It carries out the reaction alpha-ribazole 5'-phosphate + adenosylcob(III)inamide-GDP = adenosylcob(III)alamin 5'-phosphate + GMP + H(+). It functions in the pathway cofactor biosynthesis; adenosylcobalamin biosynthesis; adenosylcobalamin from cob(II)yrinate a,c-diamide: step 7/7. In terms of biological role, joins adenosylcobinamide-GDP and alpha-ribazole to generate adenosylcobalamin (Ado-cobalamin). Also synthesizes adenosylcobalamin 5'-phosphate from adenosylcobinamide-GDP and alpha-ribazole 5'-phosphate. This is Adenosylcobinamide-GDP ribazoletransferase from Nitratidesulfovibrio vulgaris (strain ATCC 29579 / DSM 644 / CCUG 34227 / NCIMB 8303 / VKM B-1760 / Hildenborough) (Desulfovibrio vulgaris).